We begin with the raw amino-acid sequence, 414 residues long: tRNA methyltransferase 10 homolog C (414 aa).

A mitochondrion-targeting transit peptide spans 1–35 (MNVTVRFLRPFARCLVPYTFHRKRSHLYSGVLQRY). At S79 the chain carries Phosphoserine. The stretch at 133–171 (GKEKAKKAKQVKKEMKAEAREEAKRARLLETTAEEQQQD) forms a coiled coil. The SAM-dependent MTase TRM10-type domain maps to 186–378 (LGWKGVQAMQ…KFVPRRKHTG (193 aa)).

It belongs to the class IV-like SAM-binding methyltransferase superfamily. TRM10 family. In terms of assembly, component of mitochondrial ribonuclease P, a complex composed of TRMT10C/MRPP1, HSD17B10/MRPP2 and PRORP/MRPP3. Interacts with HSD17B10/MRPP2; forming the MRPP1-MRPP2 subcomplex of the mitochondrial ribonuclease P complex. Interacts with GRSF1.

It is found in the mitochondrion matrix. Its subcellular location is the mitochondrion nucleoid. It carries out the reaction adenosine(9) in tRNA + S-adenosyl-L-methionine = N(1)-methyladenosine(9) in tRNA + S-adenosyl-L-homocysteine + H(+). The enzyme catalyses guanosine(9) in tRNA + S-adenosyl-L-methionine = N(1)-methylguanosine(9) in tRNA + S-adenosyl-L-homocysteine + H(+). It catalyses the reaction an adenosine in mRNA + S-adenosyl-L-methionine = an N(1)-methyladenosine in mRNA + S-adenosyl-L-homocysteine + H(+). Its function is as follows. Mitochondrial tRNA N(1)-methyltransferase involved in mitochondrial tRNA maturation. Component of mitochondrial ribonuclease P, a complex composed of TRMT10C/MRPP1, HSD17B10/MRPP2 and PRORP/MRPP3, which cleaves tRNA molecules in their 5'-ends. Together with HSD17B10/MRPP2, forms a subcomplex of the mitochondrial ribonuclease P, named MRPP1-MRPP2 subcomplex, which displays functions that are independent of the ribonuclease P activity. The MRPP1-MRPP2 subcomplex catalyzes the formation of N(1)-methylguanine and N(1)-methyladenine at position 9 (m1G9 and m1A9, respectively) in tRNAs; TRMT10C/MRPP1 acting as the catalytic N(1)-methyltransferase subunit. The MRPP1-MRPP2 subcomplex also acts as a tRNA maturation platform: following 5'-end cleavage by the mitochondrial ribonuclease P complex, the MRPP1-MRPP2 subcomplex enhances the efficiency of 3'-processing catalyzed by ELAC2, retains the tRNA product after ELAC2 processing and presents the nascent tRNA to the mitochondrial CCA tRNA nucleotidyltransferase TRNT1 enzyme. In addition to tRNA N(1)-methyltransferase activity, TRMT10C/MRPP1 also acts as a mRNA N(1)-methyltransferase by mediating methylation of adenosine residues at the N(1) position of MT-ND5 mRNA. Associates with mitochondrial DNA complexes at the nucleoids to initiate RNA processing and ribosome assembly. The protein is tRNA methyltransferase 10 homolog C of Mus musculus (Mouse).